The chain runs to 154 residues: Aspartate carbamoyltransferase regulatory chain (154 aa).

The Zn(2+) site is built by Cys-109, Cys-114, Cys-138, and Cys-141.

Belongs to the PyrI family. Contains catalytic and regulatory chains. Requires Zn(2+) as cofactor.

Functionally, involved in allosteric regulation of aspartate carbamoyltransferase. This chain is Aspartate carbamoyltransferase regulatory chain, found in Photobacterium profundum (strain SS9).